Consider the following 275-residue polypeptide: Urease accessory protein UreD (275 aa).

It belongs to the UreD family. UreD, UreF and UreG form a complex that acts as a GTP-hydrolysis-dependent molecular chaperone, activating the urease apoprotein by helping to assemble the nickel containing metallocenter of UreC. The UreE protein probably delivers the nickel.

Its subcellular location is the cytoplasm. Required for maturation of urease via the functional incorporation of the urease nickel metallocenter. The sequence is that of Urease accessory protein UreD from Cereibacter sphaeroides (strain ATCC 17023 / DSM 158 / JCM 6121 / CCUG 31486 / LMG 2827 / NBRC 12203 / NCIMB 8253 / ATH 2.4.1.) (Rhodobacter sphaeroides).